Reading from the N-terminus, the 224-residue chain is Elongation factor 1-beta (224 aa).

Belongs to the EF-1-beta/EF-1-delta family. EF-1 is composed of 4 subunits: alpha, beta (1B-alpha=beta'), delta (1B-beta), and gamma (1B-gamma).

EF-1-beta and EF-1-beta' stimulate the exchange of GDP bound to EF-1-alpha to GTP. This chain is Elongation factor 1-beta, found in Oryza sativa subsp. japonica (Rice).